A 187-amino-acid chain; its full sequence is Probable chorismate pyruvate-lyase (187 aa).

Residues arginine 81, leucine 119, and glutamate 178 each coordinate substrate.

This sequence belongs to the UbiC family.

The protein localises to the cytoplasm. It catalyses the reaction chorismate = 4-hydroxybenzoate + pyruvate. The protein operates within cofactor biosynthesis; ubiquinone biosynthesis. Its function is as follows. Removes the pyruvyl group from chorismate, with concomitant aromatization of the ring, to provide 4-hydroxybenzoate (4HB) for the ubiquinone pathway. In Thiobacillus denitrificans (strain ATCC 25259 / T1), this protein is Probable chorismate pyruvate-lyase.